Consider the following 59-residue polypeptide: Photosystem II reaction center protein K (59 aa).

A propeptide spanning residues 1–22 is cleaved from the precursor; it reads MLNIFSLICLNSDLYSSRFFLA. A helical membrane pass occupies residues 38–58; sequence MPVIPLFFLLLAFVWQAAVSF.

It belongs to the PsbK family. As to quaternary structure, PSII is composed of 1 copy each of membrane proteins PsbA, PsbB, PsbC, PsbD, PsbE, PsbF, PsbH, PsbI, PsbJ, PsbK, PsbL, PsbM, PsbT, PsbX, PsbY, PsbZ, Psb30/Ycf12, at least 3 peripheral proteins of the oxygen-evolving complex and a large number of cofactors. It forms dimeric complexes.

The protein resides in the plastid. The protein localises to the chloroplast thylakoid membrane. In terms of biological role, one of the components of the core complex of photosystem II (PSII). PSII is a light-driven water:plastoquinone oxidoreductase that uses light energy to abstract electrons from H(2)O, generating O(2) and a proton gradient subsequently used for ATP formation. It consists of a core antenna complex that captures photons, and an electron transfer chain that converts photonic excitation into a charge separation. The sequence is that of Photosystem II reaction center protein K from Oenothera elata subsp. hookeri (Hooker's evening primrose).